The chain runs to 124 residues: MPTIQQLIRTERKTLKTKTKSPALRGCPERRGVCTRVYTSTPKKPNSALRKVARVRLTSGFEVTAYIGGIGHNLQEHSVVLLRGGRVKDLPGVRYHIVRGTLDTAGVKDRRQSRSKYGAKSPKE.

Residue D89 is modified to 3-methylthioaspartic acid. Positions 103–124 (DTAGVKDRRQSRSKYGAKSPKE) are disordered.

Belongs to the universal ribosomal protein uS12 family. In terms of assembly, part of the 30S ribosomal subunit. Contacts proteins S8 and S17. May interact with IF1 in the 30S initiation complex.

With S4 and S5 plays an important role in translational accuracy. In terms of biological role, interacts with and stabilizes bases of the 16S rRNA that are involved in tRNA selection in the A site and with the mRNA backbone. Located at the interface of the 30S and 50S subunits, it traverses the body of the 30S subunit contacting proteins on the other side and probably holding the rRNA structure together. The combined cluster of proteins S8, S12 and S17 appears to hold together the shoulder and platform of the 30S subunit. This Prochlorococcus marinus (strain NATL1A) protein is Small ribosomal subunit protein uS12.